A 282-amino-acid polypeptide reads, in one-letter code: Leucine-rich protein (282 aa).

Functionally, not essential for viability or growth. Nevertheless, uncontrolled production in E.coli is detrimental to the normal physiology of the bacteria. The protein is Leucine-rich protein (lrp) of Streptococcus dysgalactiae subsp. equisimilis (Streptococcus equisimilis).